Reading from the N-terminus, the 267-residue chain is Carboxy-S-adenosyl-L-methionine synthase (267 aa).

Positions 1-11 (MPNRDTQSQND) are enriched in polar residues. Positions 1 to 25 (MPNRDTQSQNDTPRHSPEAAEPQRD) are disordered. Residues 12 to 24 (TPRHSPEAAEPQR) are compositionally biased toward basic and acidic residues. S-adenosyl-L-methionine is bound by residues tyrosine 59, 84-86 (GCS), 109-110 (DN), 137-138 (DI), asparagine 152, and arginine 219.

It belongs to the class I-like SAM-binding methyltransferase superfamily. Cx-SAM synthase family. As to quaternary structure, homodimer.

It catalyses the reaction prephenate + S-adenosyl-L-methionine = carboxy-S-adenosyl-L-methionine + 3-phenylpyruvate + H2O. In terms of biological role, catalyzes the conversion of S-adenosyl-L-methionine (SAM) to carboxy-S-adenosyl-L-methionine (Cx-SAM). The protein is Carboxy-S-adenosyl-L-methionine synthase of Yersinia pseudotuberculosis serotype O:1b (strain IP 31758).